A 463-amino-acid polypeptide reads, in one-letter code: Glutamate--tRNA ligase 2 (463 aa).

A 'HIGH' region motif is present at residues 10–20; it reads PSPTGYLHIGG. The short motif at 238–242 is the 'KMSKS' region element; that stretch reads KLSKR. Residue K241 coordinates ATP.

The protein belongs to the class-I aminoacyl-tRNA synthetase family. Glutamate--tRNA ligase type 1 subfamily. In terms of assembly, monomer.

The protein resides in the cytoplasm. It catalyses the reaction tRNA(Glu) + L-glutamate + ATP = L-glutamyl-tRNA(Glu) + AMP + diphosphate. In terms of biological role, catalyzes the attachment of glutamate to tRNA(Glu) in a two-step reaction: glutamate is first activated by ATP to form Glu-AMP and then transferred to the acceptor end of tRNA(Glu). The sequence is that of Glutamate--tRNA ligase 2 from Helicobacter acinonychis (strain Sheeba).